The primary structure comprises 360 residues: Pyrimidine monooxygenase RutA (360 aa).

Residues 49-50 (IK), N115, E124, 140-141 (RY), and S190 contribute to the FMN site.

It belongs to the NtaA/SnaA/DszA monooxygenase family. RutA subfamily.

The catalysed reaction is uracil + FMNH2 + NADH + O2 = (Z)-3-ureidoacrylate + FMN + NAD(+) + H2O + H(+). It carries out the reaction thymine + FMNH2 + NADH + O2 = (Z)-2-methylureidoacrylate + FMN + NAD(+) + H2O + H(+). Its function is as follows. Catalyzes the pyrimidine ring opening between N-3 and C-4 by an unusual flavin hydroperoxide-catalyzed mechanism, adding oxygen atoms in the process to yield ureidoacrylate peracid, that immediately reacts with FMN forming ureidoacrylate and FMN-N(5)-oxide. The FMN-N(5)-oxide reacts spontaneously with NADH to produce FMN. Requires the flavin reductase RutF to regenerate FMN in vivo. In Stutzerimonas stutzeri (strain A1501) (Pseudomonas stutzeri), this protein is Pyrimidine monooxygenase RutA.